A 165-amino-acid polypeptide reads, in one-letter code: Phosphopantetheine adenylyltransferase (165 aa).

Threonine 9 serves as a coordination point for substrate. ATP contacts are provided by residues 9–10 (TF) and histidine 17. Substrate-binding residues include lysine 41, leucine 73, and arginine 87. Residues 88 to 90 (GLR), glutamate 98, and 123 to 129 (YMFISAT) each bind ATP.

This sequence belongs to the bacterial CoaD family. Homohexamer. It depends on Mg(2+) as a cofactor.

The protein resides in the cytoplasm. The enzyme catalyses (R)-4'-phosphopantetheine + ATP + H(+) = 3'-dephospho-CoA + diphosphate. It participates in cofactor biosynthesis; coenzyme A biosynthesis; CoA from (R)-pantothenate: step 4/5. Its function is as follows. Reversibly transfers an adenylyl group from ATP to 4'-phosphopantetheine, yielding dephospho-CoA (dPCoA) and pyrophosphate. This chain is Phosphopantetheine adenylyltransferase, found in Nitrosospira multiformis (strain ATCC 25196 / NCIMB 11849 / C 71).